The sequence spans 523 residues: Ubiquilin (523 aa).

The region spanning 2–77 is the Ubiquitin-like domain; the sequence is VKINIKSSTD…VHLVKGAAPP (76 aa). Residues 70–99 are disordered; the sequence is LVKGAAPPPPPPVEQQVPTPSNTQPQGIPG. STI1 domains follow at residues 100-135 and 139-178; these read VPQNINDMMNNPMIQEMFNSRMMDSLLDNPDIFRDM and NPEMREVLNNNPEMAQMLSDPRQLRQSLEMMRNPELMREM. The span at 215–227 shows a compositional bias: low complexity; the sequence is NQQAASQNQTNSN. The tract at residues 215–325 is disordered; it reads NQQAASQNQT…ASMFGGGGGG (111 aa). Over residues 228 to 241 the composition is skewed to polar residues; sequence PIQTNTDANPNSQP. Residues 245–278 are compositionally biased toward low complexity; sequence PWSTNSSSTSSNPTSSSPSSRPTTGSSTNTGASN. The span at 285–296 shows a compositional bias: gly residues; the sequence is SGGGGGMGGGTN. Low complexity predominate over residues 297–310; the sequence is NTGTNNTGSTNNTG. 2 consecutive STI1 domains span residues 339–380 and 383–415; these read DPER…RQMM and NPQLREAMNNPEFLNMMTNPENMNAMMQLQQAM. Positions 480–523 constitute a UBA domain; it reads PPEQRFRLQLEQLEELGFVDRAANISALTSTNGNINLAIDRLLR.

Its function is as follows. Stable protein which acts as an antagonist of nosA by repressing cellular differentiation after the tight-aggregate stage, when cells differentiate into two precursor cell types, prespore and prestalk cells, prior to the formation of fruiting bodies. The chain is Ubiquilin (ubqln) from Dictyostelium discoideum (Social amoeba).